The following is a 93-amino-acid chain: Small ribosomal subunit protein uS19 (93 aa).

The protein belongs to the universal ribosomal protein uS19 family.

Its function is as follows. Protein S19 forms a complex with S13 that binds strongly to the 16S ribosomal RNA. This is Small ribosomal subunit protein uS19 from Helicobacter pylori (strain G27).